Reading from the N-terminus, the 357-residue chain is UDP-N-acetylglucosamine--N-acetylmuramyl-(pentapeptide) pyrophosphoryl-undecaprenol N-acetylglucosamine transferase (357 aa).

Residues 11–13 (TGG), Asn-120, Arg-161, Ser-188, and Gln-281 contribute to the UDP-N-acetyl-alpha-D-glucosamine site.

It belongs to the glycosyltransferase 28 family. MurG subfamily.

The protein localises to the cell inner membrane. It carries out the reaction di-trans,octa-cis-undecaprenyl diphospho-N-acetyl-alpha-D-muramoyl-L-alanyl-D-glutamyl-meso-2,6-diaminopimeloyl-D-alanyl-D-alanine + UDP-N-acetyl-alpha-D-glucosamine = di-trans,octa-cis-undecaprenyl diphospho-[N-acetyl-alpha-D-glucosaminyl-(1-&gt;4)]-N-acetyl-alpha-D-muramoyl-L-alanyl-D-glutamyl-meso-2,6-diaminopimeloyl-D-alanyl-D-alanine + UDP + H(+). It participates in cell wall biogenesis; peptidoglycan biosynthesis. In terms of biological role, cell wall formation. Catalyzes the transfer of a GlcNAc subunit on undecaprenyl-pyrophosphoryl-MurNAc-pentapeptide (lipid intermediate I) to form undecaprenyl-pyrophosphoryl-MurNAc-(pentapeptide)GlcNAc (lipid intermediate II). The polypeptide is UDP-N-acetylglucosamine--N-acetylmuramyl-(pentapeptide) pyrophosphoryl-undecaprenol N-acetylglucosamine transferase (Prochlorococcus marinus (strain SARG / CCMP1375 / SS120)).